The sequence spans 100 residues: Large ribosomal subunit protein bL28 (100 aa).

This sequence belongs to the bacterial ribosomal protein bL28 family.

This chain is Large ribosomal subunit protein bL28, found in Gluconobacter oxydans (strain 621H) (Gluconobacter suboxydans).